The primary structure comprises 632 residues: RNA-binding post-transcriptional regulator csx1 (632 aa).

A phosphoserine; by MAPK sty1 mark is found at Ser42 and Ser54. Phosphoserine occurs at positions 67 and 69. RRM domains lie at 85 to 167 (DTLW…WATG) and 182 to 261 (FSIF…VASP). Ser291 is subject to Phosphoserine; by MAPK sty1. The 73-residue stretch at 297-369 (TTVFVGGLAS…SHIRLAWGHN (73 aa)) folds into the RRM 3 domain. The residue at position 455 (Ser455) is a Phosphoserine; by MAPK sty1. A disordered region spans residues 456 to 476 (PPPLSRSASISPTLSGSGSGL). Residues 466-476 (SPTLSGSGSGL) show a composition bias toward low complexity.

As to quaternary structure, interacts with cip1 and cip2.

It localises to the cytoplasm. In terms of biological role, regulates global gene expression after oxidative stress. Interacts and stabilizes atf1 and pcr1 mRNAs after oxidative stress, thus controlling their turnover. This Schizosaccharomyces pombe (strain 972 / ATCC 24843) (Fission yeast) protein is RNA-binding post-transcriptional regulator csx1 (csx1).